The chain runs to 221 residues: UPF0319 protein CGSHiGG_02140 (221 aa).

The N-terminal stretch at 1–21 (MKLRAVVLGLATLCTSTATFA) is a signal peptide.

Belongs to the UPF0319 family.

This is UPF0319 protein CGSHiGG_02140 from Haemophilus influenzae (strain PittGG).